The chain runs to 392 residues: NADH-quinone oxidoreductase subunit D (392 aa).

Belongs to the complex I 49 kDa subunit family. In terms of assembly, NDH-1 is composed of 14 different subunits. Subunits NuoB, C, D, E, F, and G constitute the peripheral sector of the complex.

The protein resides in the cell inner membrane. It catalyses the reaction a quinone + NADH + 5 H(+)(in) = a quinol + NAD(+) + 4 H(+)(out). NDH-1 shuttles electrons from NADH, via FMN and iron-sulfur (Fe-S) centers, to quinones in the respiratory chain. The immediate electron acceptor for the enzyme in this species is believed to be ubiquinone. Couples the redox reaction to proton translocation (for every two electrons transferred, four hydrogen ions are translocated across the cytoplasmic membrane), and thus conserves the redox energy in a proton gradient. The chain is NADH-quinone oxidoreductase subunit D from Paramagnetospirillum magneticum (strain ATCC 700264 / AMB-1) (Magnetospirillum magneticum).